A 353-amino-acid chain; its full sequence is F-box protein At3g58530 (353 aa).

Residues 8–56 (EEEEETWRREIVTSVMRLVSTRLPQTDLISLLLVSPWLYRTLISYPSIW) form the F-box; degenerate domain.

The polypeptide is F-box protein At3g58530 (Arabidopsis thaliana (Mouse-ear cress)).